Reading from the N-terminus, the 455-residue chain is Ribulose bisphosphate carboxylase large chain (455 aa).

Lys5 is subject to N6,N6,N6-trimethyllysine. 2 residues coordinate substrate: Asn114 and Thr164. Catalysis depends on Lys166, which acts as the Proton acceptor. Lys168 contributes to the substrate binding site. The Mg(2+) site is built by Lys192, Asp194, and Glu195. Lys192 bears the N6-carboxylysine mark. The Proton acceptor role is filled by His285. Residues Arg286, His318, and Ser370 each contribute to the substrate site.

It belongs to the RuBisCO large chain family. Type I subfamily. In terms of assembly, heterohexadecamer of 8 large chains and 8 small chains; disulfide-linked. The disulfide link is formed within the large subunit homodimers. Mg(2+) is required as a cofactor. In terms of processing, the disulfide bond which can form in the large chain dimeric partners within the hexadecamer appears to be associated with oxidative stress and protein turnover.

The protein localises to the plastid. Its subcellular location is the chloroplast. It carries out the reaction 2 (2R)-3-phosphoglycerate + 2 H(+) = D-ribulose 1,5-bisphosphate + CO2 + H2O. The catalysed reaction is D-ribulose 1,5-bisphosphate + O2 = 2-phosphoglycolate + (2R)-3-phosphoglycerate + 2 H(+). Its function is as follows. RuBisCO catalyzes two reactions: the carboxylation of D-ribulose 1,5-bisphosphate, the primary event in carbon dioxide fixation, as well as the oxidative fragmentation of the pentose substrate in the photorespiration process. Both reactions occur simultaneously and in competition at the same active site. This chain is Ribulose bisphosphate carboxylase large chain, found in Lupinus microcarpus var. densiflorus (Whitewhorl lupine).